Consider the following 283-residue polypeptide: Phosphatidylserine decarboxylase proenzyme (283 aa).

Residues D96, H152, and S250 each act as charge relay system; for autoendoproteolytic cleavage activity in the active site. Catalysis depends on S250, which acts as the Schiff-base intermediate with substrate; via pyruvic acid; for decarboxylase activity. S250 is modified (pyruvic acid (Ser); by autocatalysis).

This sequence belongs to the phosphatidylserine decarboxylase family. PSD-B subfamily. Prokaryotic type I sub-subfamily. In terms of assembly, heterodimer of a large membrane-associated beta subunit and a small pyruvoyl-containing alpha subunit. Requires pyruvate as cofactor. In terms of processing, is synthesized initially as an inactive proenzyme. Formation of the active enzyme involves a self-maturation process in which the active site pyruvoyl group is generated from an internal serine residue via an autocatalytic post-translational modification. Two non-identical subunits are generated from the proenzyme in this reaction, and the pyruvate is formed at the N-terminus of the alpha chain, which is derived from the carboxyl end of the proenzyme. The autoendoproteolytic cleavage occurs by a canonical serine protease mechanism, in which the side chain hydroxyl group of the serine supplies its oxygen atom to form the C-terminus of the beta chain, while the remainder of the serine residue undergoes an oxidative deamination to produce ammonia and the pyruvoyl prosthetic group on the alpha chain. During this reaction, the Ser that is part of the protease active site of the proenzyme becomes the pyruvoyl prosthetic group, which constitutes an essential element of the active site of the mature decarboxylase.

Its subcellular location is the cell membrane. It carries out the reaction a 1,2-diacyl-sn-glycero-3-phospho-L-serine + H(+) = a 1,2-diacyl-sn-glycero-3-phosphoethanolamine + CO2. It participates in phospholipid metabolism; phosphatidylethanolamine biosynthesis; phosphatidylethanolamine from CDP-diacylglycerol: step 2/2. Functionally, catalyzes the formation of phosphatidylethanolamine (PtdEtn) from phosphatidylserine (PtdSer). This Acinetobacter baumannii (strain SDF) protein is Phosphatidylserine decarboxylase proenzyme.